The sequence spans 336 residues: Vacuolar protein sorting-associated protein 26B (336 aa).

Phosphoserine is present on residues serine 302, serine 304, and serine 319.

Belongs to the VPS26 family. Component of the heterotrimeric retromer cargo-selective complex (CSC), also described as vacuolar protein sorting VPS subcomplex (VPS,) formed by VPS26 (VPS26A or VPS26B), VPS29 and VPS35. The CSC has a highly elongated structure with VPS26 and VPS29 binding independently at opposite distal ends of VPS35 as central platform. The CSC is believed to associate with variable sorting nexins to form functionally distinct retromer complex variants. The originally described retromer complex (also called SNX-BAR retromer) is a pentamer containing the CSC and a heterodimeric membrane-deforming subcomplex formed between SNX1 or SNX2 and SNX5 or SNX6 (also called SNX-BAR subcomplex); the respective CSC and SNX-BAR subcomplexes associate with low affinity. The CSC associates with SNX3 to form a SNX3-retromer complex. The CSC associates with SNX27, the WASH complex and the SNX-BAR subcomplex to form the SNX27-retromer complex. Interacts with VPS29, VPS35, TBC1D5, GOLPH3, SNX27.

It localises to the cytoplasm. The protein resides in the membrane. Its subcellular location is the early endosome. It is found in the late endosome. In terms of biological role, acts as a component of the retromer cargo-selective complex (CSC). The CSC is believed to be the core functional component of retromer or respective retromer complex variants acting to prevent missorting of selected transmembrane cargo proteins into the lysosomal degradation pathway. The recruitment of the CSC to the endosomal membrane involves RAB7A and SNX3. The SNX-BAR retromer mediates retrograde transport of cargo proteins from endosomes to the trans-Golgi network (TGN) and is involved in endosome-to-plasma membrane transport for cargo protein recycling. The SNX3-retromer mediates the retrograde transport of WLS distinct from the SNX-BAR retromer pathway. The SNX27-retromer is believed to be involved in endosome-to-plasma membrane trafficking and recycling of a broad spectrum of cargo proteins. The CSC seems to act as recruitment hub for other proteins, such as the WASH complex and TBC1D5. May be involved in retrograde transport of SORT1 but not of IGF2R. Acts redundantly with VSP26A in SNX-27 mediated endocytic recycling of SLC2A1/GLUT1. This chain is Vacuolar protein sorting-associated protein 26B (VPS26B), found in Homo sapiens (Human).